The following is a 249-amino-acid chain: Probable transcriptional regulatory protein Tgr7_2237 (249 aa).

The protein belongs to the TACO1 family.

The protein localises to the cytoplasm. The chain is Probable transcriptional regulatory protein Tgr7_2237 from Thioalkalivibrio sulfidiphilus (strain HL-EbGR7).